The following is a 50-amino-acid chain: Ribosome-inactivating protein lyophyllin (50 aa).

It carries out the reaction Endohydrolysis of the N-glycosidic bond at one specific adenosine on the 28S rRNA.. N-glycosylase that inhibits protein synthesis by depurinating ribosomal rRNA, and thus acts as a ribosomal inactivating protein (RIP). Has adenine polynucleotide glycosidase activity on the poly(A) substrate A30-ssDNA. Inhibits cell-free translation in rabbit reticulocyte lysate system with an IC(50) of 1 nM. May function in the defense response to pathogens. Displays antifungal activity against C.comatus and P.piricola, but not against R.solani, M.arachidicola and C.gossypii. Inhibits mycelial growth in P.piricola with an IC(50) of 2.5 uM. Has cytotoxic activity against the human cancer cell lines Hela, HepG2, and JAR, with IC(50) of 358.8, 489.8, and 926.9 nM respectively. It also inhibits HIV-1 reverse transcriptase activity (IC(50)=7.9 nM) and disrupts mouse embryonic development. The polypeptide is Ribosome-inactivating protein lyophyllin (Lyophyllum shimeji (Hon-shimeji)).